Here is a 471-residue protein sequence, read N- to C-terminus: FAD-linked oxidoreductase sorD (471 aa).

The signal sequence occupies residues 1–23 (MQAASAFATCLLASVGGNSSAVA). Residues Asn-18, Asn-29, Asn-174, Asn-279, and Asn-351 are each glycosylated (N-linked (GlcNAc...) asparagine). Positions 41-212 (LLTTPSAIVW…TDFSIRTEPV (172 aa)) constitute an FAD-binding PCMH-type domain.

Belongs to the oxygen-dependent FAD-linked oxidoreductase family. The cofactor is FAD.

It functions in the pathway secondary metabolite biosynthesis. In terms of biological role, FAD-linked oxidoreductase; part of the gene cluster that mediates the biosynthesis of sorbicillinoids, a diverse group of yellow secondary metabolites that restrict growth of competing pathogenic fungi but not of bacteria. Sorbicillinoids biosynthesis requires the action of two PKSs. SorA iteratively combines three acetyl units and the growing chain is modified by the ketoacyl reductase subunit, and optional by the enoyl reductase subunit in the second cycle. The polyketide is then handed over to the PKS SorB, which adds three more acetyl units, and two methyl groups. SorB releases an aldehyde, which undergoes spontaneous cyclization resulting in the formation of sorbicillin or 2',3'-dihydrosorbicillin. The monooxygenase sorC oxidizes sorbicillin and 2',3'-dihydrosorbicillin to 2',3'-dihydrosorbicillinol and sorbicillinol, respectively. The oxidoreductase sorD further converts sorbicillinol into oxosorbicillinol. Sorbicillinol is the building block for the other sorbicillinoids such as disorbicillinol, bisvertinolon, and dihydrobisvertinolone. The chain is FAD-linked oxidoreductase sorD from Penicillium rubens (strain ATCC 28089 / DSM 1075 / NRRL 1951 / Wisconsin 54-1255) (Penicillium chrysogenum).